The following is a 160-amino-acid chain: Cytochrome b6-f complex subunit 4 (160 aa).

The next 3 helical transmembrane spans lie at 36 to 56 (LLYT…GLAV), 95 to 115 (LLGV…PFIE), and 131 to 151 (TVFL…TLPI).

It belongs to the cytochrome b family. PetD subfamily. In terms of assembly, the 4 large subunits of the cytochrome b6-f complex are cytochrome b6, subunit IV (17 kDa polypeptide, petD), cytochrome f and the Rieske protein, while the 4 small subunits are petG, petL, petM and petN. The complex functions as a dimer.

It is found in the plastid. The protein localises to the chloroplast thylakoid membrane. Its function is as follows. Component of the cytochrome b6-f complex, which mediates electron transfer between photosystem II (PSII) and photosystem I (PSI), cyclic electron flow around PSI, and state transitions. The sequence is that of Cytochrome b6-f complex subunit 4 from Mesostigma viride (Green alga).